Reading from the N-terminus, the 535-residue chain is Pentatricopeptide repeat-containing protein At5g16420, mitochondrial (535 aa).

Residues 1 to 28 (MFLSRVNPTRFPPFVASRRLFSASASAA) constitute a mitochondrion transit peptide. PPR repeat units lie at residues 82-112 (NYDTYHSILFKLSRARAFDPVESLMADLRNS), 119-153 (GENLFIDLLRNYGLAGRYESSMRIFLRIPDFGVKR), 154-189 (SVRSLNTLLNVLIQNQRFDLVHAMFKNSKESFGITP), 190-224 (NIFTCNLLVKALCKKNDIESAYKVLDEIPSMGLVP), 225-259 (NLVTYTTILGGYVARGDMESAKRVLEEMLDRGWYP), 260-294 (DATTYTVLMDGYCKLGRFSEAATVMDDMEKNEIEP), 295-329 (NEVTYGVMIRALCKEKKSGEARNMFDEMLERSFMP), 330-364 (DSSLCCKVIDALCEDHKVDEACGLWRKMLKNNCMP), 365-395 (DNALLSTLIHWLCKEGRVTEARKLFDEFEKG), 399-433 (SLLTYNTLIAGMCEKGELTEAGRLWDDMYERKCKP), 434-468 (NAFTYNVLIEGLSKNGNVKEGVRVLEEMLEIGCFP), and 469-503 (NKTTFLILFEGLQKLGKEEDAMKIVSMAVMNGKVD).

This sequence belongs to the PPR family. P subfamily.

It localises to the mitochondrion. The polypeptide is Pentatricopeptide repeat-containing protein At5g16420, mitochondrial (Arabidopsis thaliana (Mouse-ear cress)).